The primary structure comprises 365 residues: Galactoside alpha-(1,2)-fucosyltransferase 1 (365 aa).

Over 1-8 (MWPLSHRH) the chain is Cytoplasmic. The chain crosses the membrane as a helical; Signal-anchor for type II membrane protein span at residues 9–25 (LCLAFLLVCVLSAISFF). The Lumenal portion of the chain corresponds to 26-365 (LHIYQDSIRH…LSPLWTLAEP (340 aa)). N65, N301, and N327 each carry an N-linked (GlcNAc...) asparagine glycan.

This sequence belongs to the glycosyltransferase 11 family.

The protein resides in the golgi apparatus. Its subcellular location is the golgi stack membrane. It catalyses the reaction a beta-D-galactosyl-(1-&gt;4)-N-acetyl-beta-D-glucosaminyl derivative + GDP-beta-L-fucose = an alpha-L-Fuc-(1-&gt;2)-beta-D-Gal-(1-&gt;4)-beta-D-GlcNAc derivative + GDP + H(+). It carries out the reaction a ganglioside GA1 + GDP-beta-L-fucose = a ganglioside Fuc-GA1 + GDP + H(+). The catalysed reaction is a beta-D-Gal-(1-&gt;3)-beta-D-GlcNAc-(1-&gt;3)-beta-D-Gal-(1-&gt;4)-beta-D-Glc-(1&lt;-&gt;1')-Cer(d18:1(4E)) + GDP-beta-L-fucose = alpha-L-fucosyl-(1-&gt;2)- beta-D-galactosyl-(1-&gt;3)-N-acetyl-beta-D-glucosaminyl-(1-&gt;3)-beta-D-galactosyl-(1-&gt;4)-beta-D-glucosyl-(1&lt;-&gt;1')-N-acylsphing-4-enine + GDP + H(+). The enzyme catalyses a neolactoside nLc4Cer(d18:1(4E)) + GDP-beta-L-fucose = a neolactoside IV(2)-alpha-Fuc-nLc4Cer(d18:1(4E)) + GDP + H(+). It catalyses the reaction a ganglioside GM1 + GDP-beta-L-fucose = a ganglioside Fuc-GM1 + GDP + H(+). It carries out the reaction beta-D-galactosyl-(1-&gt;3)-N-acetyl-D-galactosamine + GDP-beta-L-fucose = alpha-L-fucosyl-(1-&gt;2)-beta-D-galactosyl-(1-&gt;3)-N-acetyl-D-galactosamine + GDP + H(+). It functions in the pathway protein modification; protein glycosylation. Functionally, catalyzes the transfer of L-fucose, from a guanosine diphosphate-beta-L-fucose, to the terminal galactose residue of glycoconjugates through an alpha(1,2) linkage leading to H antigen synthesis that is an intermediate substrate in the synthesis of ABO blood group antigens. H antigen is essential for maturation of the glomerular layer of the main olfactory bulb, in cell migration and early cell-cell contacts during tumor associated angiogenesis. Preferentially fucosylates soluble lactose and to a lesser extent fucosylates glycolipids gangliosides GA1 and GM1a. This is Galactoside alpha-(1,2)-fucosyltransferase 1 from Mico humeralifer (Black and white tassel-ear marmoset).